The primary structure comprises 478 residues: Cytochrome c-552 (478 aa).

Positions 1–26 are cleaved as a signal peptide; the sequence is MARKTLRARRFFSLIFPFFFITSVYA. H94 lines the heme c pocket. Residues C122, C125, and K126 each coordinate heme. Residues C160, C163, H164, C209, C212, and H213 each coordinate heme c. The Ca(2+) site is built by E215, Y216, K261, and Q263. Y216 lines the substrate pocket. H264 contributes to the substrate binding site. Heme c-binding residues include H275, C282, C285, H286, H301, C314, C317, H318, and H393.

Belongs to the cytochrome c-552 family. Ca(2+) is required as a cofactor. Heme c serves as cofactor.

The protein localises to the periplasm. The enzyme catalyses 6 Fe(III)-[cytochrome c] + NH4(+) + 2 H2O = 6 Fe(II)-[cytochrome c] + nitrite + 8 H(+). The protein operates within nitrogen metabolism; nitrate reduction (assimilation). In terms of biological role, catalyzes the reduction of nitrite to ammonia, consuming six electrons in the process. In Salmonella schwarzengrund (strain CVM19633), this protein is Cytochrome c-552.